Reading from the N-terminus, the 90-residue chain is Small ribosomal subunit protein uS17 (90 aa).

This sequence belongs to the universal ribosomal protein uS17 family. As to quaternary structure, part of the 30S ribosomal subunit.

Its function is as follows. One of the primary rRNA binding proteins, it binds specifically to the 5'-end of 16S ribosomal RNA. In Gluconobacter oxydans (strain 621H) (Gluconobacter suboxydans), this protein is Small ribosomal subunit protein uS17.